A 496-amino-acid polypeptide reads, in one-letter code: Aspartyl/glutamyl-tRNA(Asn/Gln) amidotransferase subunit B (496 aa).

This sequence belongs to the GatB/GatE family. GatB subfamily. As to quaternary structure, heterotrimer of A, B and C subunits.

The catalysed reaction is L-glutamyl-tRNA(Gln) + L-glutamine + ATP + H2O = L-glutaminyl-tRNA(Gln) + L-glutamate + ADP + phosphate + H(+). It carries out the reaction L-aspartyl-tRNA(Asn) + L-glutamine + ATP + H2O = L-asparaginyl-tRNA(Asn) + L-glutamate + ADP + phosphate + 2 H(+). Functionally, allows the formation of correctly charged Asn-tRNA(Asn) or Gln-tRNA(Gln) through the transamidation of misacylated Asp-tRNA(Asn) or Glu-tRNA(Gln) in organisms which lack either or both of asparaginyl-tRNA or glutaminyl-tRNA synthetases. The reaction takes place in the presence of glutamine and ATP through an activated phospho-Asp-tRNA(Asn) or phospho-Glu-tRNA(Gln). In Natronomonas pharaonis (strain ATCC 35678 / DSM 2160 / CIP 103997 / JCM 8858 / NBRC 14720 / NCIMB 2260 / Gabara) (Halobacterium pharaonis), this protein is Aspartyl/glutamyl-tRNA(Asn/Gln) amidotransferase subunit B.